Reading from the N-terminus, the 394-residue chain is Elongation factor Tu 2 (394 aa).

Residues 10 to 204 (KPHVNVGTIG…HLDTYIPEPE (195 aa)) form the tr-type G domain. The tract at residues 19–26 (GHVDHGKT) is G1. GTP is bound at residue 19-26 (GHVDHGKT). Mg(2+) is bound at residue Thr-26. Residues 60–64 (GITIN) form a G2 region. The interval 81–84 (DCPG) is G3. Residues 81–85 (DCPGH) and 136–139 (NKCD) each bind GTP. The interval 136–139 (NKCD) is G4. The tract at residues 174-176 (SAL) is G5.

This sequence belongs to the TRAFAC class translation factor GTPase superfamily. Classic translation factor GTPase family. EF-Tu/EF-1A subfamily. Monomer.

It is found in the cytoplasm. The enzyme catalyses GTP + H2O = GDP + phosphate + H(+). Functionally, GTP hydrolase that promotes the GTP-dependent binding of aminoacyl-tRNA to the A-site of ribosomes during protein biosynthesis. The chain is Elongation factor Tu 2 from Haemophilus influenzae (strain 86-028NP).